The following is a 117-amino-acid chain: Small ribosomal subunit protein bS6 (117 aa).

It belongs to the bacterial ribosomal protein bS6 family.

In terms of biological role, binds together with bS18 to 16S ribosomal RNA. The polypeptide is Small ribosomal subunit protein bS6 (Trichodesmium erythraeum (strain IMS101)).